The following is a 492-amino-acid chain: WD repeat-containing protein JIP5 (492 aa).

5 WD repeats span residues 127–166 (RHKG…VVKK), 178–217 (KKND…LSNS), 236–274 (RSAY…ILIS), 276–317 (DQED…LEDQ), and 365–405 (RNHS…VEEN). 2 stretches are compositionally biased toward acidic residues: residues 404–414 (ENASVESDSDE) and 422–433 (DLSDDTSSDDET). Residues 404–472 (ENASVESDSD…SKSVKKRKIM (69 aa)) are disordered. Residues 449–462 (KDLKEDHQEEKESN) show a composition bias toward basic and acidic residues.

As to quaternary structure, interacts with BUD27 and GIS1.

The protein resides in the nucleus. The protein localises to the nucleolus. The chain is WD repeat-containing protein JIP5 (JIP5) from Saccharomyces cerevisiae (strain ATCC 204508 / S288c) (Baker's yeast).